Here is a 1569-residue protein sequence, read N- to C-terminus: Pentafunctional AROM polypeptide (1569 aa).

The interval 1 to 382 (MAEAKKPGPE…HEPRASVVDD (382 aa)) is 3-dehydroquinate synthase. NAD(+)-binding positions include 49-51 (DTN), 84-87 (EASK), 115-117 (GGV), and Asp120. Arg131 contacts 7-phospho-2-dehydro-3-deoxy-D-arabino-heptonate. 140–141 (TT) is an NAD(+) binding site. Positions 147 and 153 each coordinate 7-phospho-2-dehydro-3-deoxy-D-arabino-heptonate. Lys162 is an NAD(+) binding site. Asn163 is a binding site for 7-phospho-2-dehydro-3-deoxy-D-arabino-heptonate. NAD(+)-binding positions include 180 to 183 (FLET) and Asn191. Glu195 is a binding site for Zn(2+). Residues 195–198 (EVVK) and Lys248 each bind 7-phospho-2-dehydro-3-deoxy-D-arabino-heptonate. Glu258 (proton acceptor; for 3-dehydroquinate synthase activity) is an active-site residue. Residues 262–266 (RNLLN) and His269 contribute to the 7-phospho-2-dehydro-3-deoxy-D-arabino-heptonate site. His269 contacts Zn(2+). The Proton acceptor; for 3-dehydroquinate synthase activity role is filled by His273. 7-phospho-2-dehydro-3-deoxy-D-arabino-heptonate is bound by residues His285 and Lys354. His285 serves as a coordination point for Zn(2+). Residues 395 to 837 (VTPGVPSNLD…WDILSQAFKV (443 aa)) are EPSP synthase. Cys819 functions as the For EPSP synthase activity in the catalytic mechanism. The segment at 859 to 1053 (ERSVFIIGMR…MEKDHSFFVS (195 aa)) is shikimate kinase. 866–873 (GMRGAGKT) serves as a coordination point for ATP. Positions 1054–1267 (LTVPDVSEAA…AAPGQMSAAE (214 aa)) are 3-dehydroquinase. His1170 acts as the Proton acceptor; for 3-dehydroquinate dehydratase activity in catalysis. Lys1198 (schiff-base intermediate with substrate; for 3-dehydroquinate dehydratase activity) is an active-site residue. Residues 1280-1569 (PCNFYLFGKP…RDARSAVLGL (290 aa)) are shikimate dehydrogenase.

The protein in the N-terminal section; belongs to the sugar phosphate cyclases superfamily. Dehydroquinate synthase family. This sequence in the 2nd section; belongs to the EPSP synthase family. It in the 3rd section; belongs to the shikimate kinase family. In the 4th section; belongs to the type-I 3-dehydroquinase family. The protein in the C-terminal section; belongs to the shikimate dehydrogenase family. In terms of assembly, homodimer. Requires Zn(2+) as cofactor.

The protein localises to the cytoplasm. The catalysed reaction is 7-phospho-2-dehydro-3-deoxy-D-arabino-heptonate = 3-dehydroquinate + phosphate. It carries out the reaction 3-dehydroquinate = 3-dehydroshikimate + H2O. It catalyses the reaction shikimate + NADP(+) = 3-dehydroshikimate + NADPH + H(+). The enzyme catalyses shikimate + ATP = 3-phosphoshikimate + ADP + H(+). The catalysed reaction is 3-phosphoshikimate + phosphoenolpyruvate = 5-O-(1-carboxyvinyl)-3-phosphoshikimate + phosphate. Its pathway is metabolic intermediate biosynthesis; chorismate biosynthesis; chorismate from D-erythrose 4-phosphate and phosphoenolpyruvate: step 2/7. It functions in the pathway metabolic intermediate biosynthesis; chorismate biosynthesis; chorismate from D-erythrose 4-phosphate and phosphoenolpyruvate: step 3/7. The protein operates within metabolic intermediate biosynthesis; chorismate biosynthesis; chorismate from D-erythrose 4-phosphate and phosphoenolpyruvate: step 4/7. It participates in metabolic intermediate biosynthesis; chorismate biosynthesis; chorismate from D-erythrose 4-phosphate and phosphoenolpyruvate: step 5/7. Its pathway is metabolic intermediate biosynthesis; chorismate biosynthesis; chorismate from D-erythrose 4-phosphate and phosphoenolpyruvate: step 6/7. Its function is as follows. The AROM polypeptide catalyzes 5 consecutive enzymatic reactions in prechorismate polyaromatic amino acid biosynthesis. The chain is Pentafunctional AROM polypeptide from Fusarium vanettenii (strain ATCC MYA-4622 / CBS 123669 / FGSC 9596 / NRRL 45880 / 77-13-4) (Fusarium solani subsp. pisi).